The chain runs to 91 residues: DNA-binding protein HU-beta 2 (91 aa).

Belongs to the bacterial histone-like protein family.

In terms of biological role, histone-like DNA-binding protein which is capable of wrapping DNA to stabilize it, and thus to prevent its denaturation under extreme environmental conditions. This is DNA-binding protein HU-beta 2 (hupB2) from Neisseria meningitidis serogroup A / serotype 4A (strain DSM 15465 / Z2491).